A 249-amino-acid chain; its full sequence is Putative [LysW]-aminoadipate/[LysW]-glutamate kinase (249 aa).

Substrate-binding residues include R63 and N166.

Belongs to the acetylglutamate kinase family. LysZ subfamily.

It localises to the cytoplasm. The catalysed reaction is [amino-group carrier protein]-C-terminal-N-(1,4-dicarboxybutan-1-yl)-L-glutamine + ATP = [amino-group carrier protein]-C-terminal-N-(1-carboxy-5-phosphooxy-5-oxopentan-1-yl)-L-glutamine + ADP. It carries out the reaction [amino-group carrier protein]-C-terminal-gamma-(L-glutamyl)-L-glutamate + ATP = [amino-group carrier protein]-C-terminal-gamma-(5-phospho-L-glutamyl)-L-glutamate + ADP. The protein operates within amino-acid biosynthesis; L-lysine biosynthesis via AAA pathway; L-lysine from L-alpha-aminoadipate (Thermus route): step 2/5. It participates in amino-acid biosynthesis; L-arginine biosynthesis. In terms of biological role, involved in both the arginine and lysine biosynthetic pathways. Phosphorylates the LysW-bound precursors glutamate (for arginine biosynthesis), respectively alpha-aminoadipate (for lysine biosynthesis). The protein is Putative [LysW]-aminoadipate/[LysW]-glutamate kinase of Pyrococcus furiosus (strain ATCC 43587 / DSM 3638 / JCM 8422 / Vc1).